Consider the following 67-residue polypeptide: Large ribosomal subunit protein uL29 (67 aa).

The protein belongs to the universal ribosomal protein uL29 family.

The chain is Large ribosomal subunit protein uL29 from Sorangium cellulosum (strain So ce56) (Polyangium cellulosum (strain So ce56)).